A 399-amino-acid chain; its full sequence is Chorismate synthase (399 aa).

NADP(+) contacts are provided by Arg-40 and Arg-46. Residues 135–137 (RAS), 256–257 (QA), Gly-301, 316–320 (KPIAT), and Arg-342 contribute to the FMN site.

This sequence belongs to the chorismate synthase family. Homotetramer. The cofactor is FMNH2.

The enzyme catalyses 5-O-(1-carboxyvinyl)-3-phosphoshikimate = chorismate + phosphate. The protein operates within metabolic intermediate biosynthesis; chorismate biosynthesis; chorismate from D-erythrose 4-phosphate and phosphoenolpyruvate: step 7/7. Functionally, catalyzes the anti-1,4-elimination of the C-3 phosphate and the C-6 proR hydrogen from 5-enolpyruvylshikimate-3-phosphate (EPSP) to yield chorismate, which is the branch point compound that serves as the starting substrate for the three terminal pathways of aromatic amino acid biosynthesis. This reaction introduces a second double bond into the aromatic ring system. The protein is Chorismate synthase of Pseudarthrobacter chlorophenolicus (strain ATCC 700700 / DSM 12829 / CIP 107037 / JCM 12360 / KCTC 9906 / NCIMB 13794 / A6) (Arthrobacter chlorophenolicus).